We begin with the raw amino-acid sequence, 313 residues long: MQRRHFLQKTLLALPIIFSGNLLTGCKTNLSDDYLPDDKITNNPNLLQNKLKEILPIWENKFNAKIGMTIIADNGELSSHRGNEYFPVNSTIKAFIASHILLLVDKEKLDLNEKIIIKESDLIEYSPVCKKYFDENKPISISELCEATITLSDNGSANILLDKIGGLTAFNQFLKEIGADMVLANNEPLLNRSHYGETSDTAKPIPYTKSLKALIVGNILSNQSKEQLITWLINDKVADNLLRKYLPKNWRIGDKTGTGSESKNIIAVIWNENNKPYFISLFITQPHDGKSLDFKNQKDEIMAQIGKEIYPFL.

The signal sequence occupies residues 1 to 25 (MQRRHFLQKTLLALPIIFSGNLLTG). Residue Cys-26 is the site of N-palmitoyl cysteine attachment. The S-diacylglycerol cysteine moiety is linked to residue Cys-26. The active-site Acyl-ester intermediate is Ser-90. A substrate-binding site is contributed by 255–257 (KTG).

Belongs to the class-A beta-lactamase family.

The protein resides in the cell membrane. It catalyses the reaction a beta-lactam + H2O = a substituted beta-amino acid. The chain is Beta-lactamase BRO-1 (bla) from Moraxella catarrhalis (Branhamella catarrhalis).